The chain runs to 317 residues: Taste receptor type 2 member 14 (317 aa).

The Extracellular segment spans residues Met-1 to Ser-7. A helical transmembrane segment spans residues Ile-8 to Ala-28. Topologically, residues Leu-29 to Lys-55 are cytoplasmic. Residues Ile-56–Phe-76 form a helical membrane-spanning segment. At Ala-77–Asn-87 the chain is on the extracellular side. 2 residues coordinate cholesterol: Thr-86 and Trp-89. A helical transmembrane segment spans residues Ile-88–Phe-108. At Leu-109–Val-129 the chain is on the cytoplasmic side. A helical transmembrane segment spans residues Val-130–Ile-150. Residues His-151 to Thr-184 lie on the Extracellular side of the membrane. N-linked (GlcNAc...) asparagine glycosylation is found at Asn-153, Asn-162, and Asn-171. Position 180 (Val-180) interacts with cholesterol. The helical transmembrane segment at Val-185–Xaa-205 threads the bilayer. Residues Trp-206–Ser-232 lie on the Cytoplasmic side of the membrane. The helical transmembrane segment at Val-233–Thr-253 threads the bilayer. Residues Ser-254–Leu-261 lie on the Extracellular side of the membrane. Residues Ile-262–Leu-282 form a helical membrane-spanning segment. 2 residues coordinate cholesterol: Ser-265 and Met-268. The Cytoplasmic segment spans residues Gly-283–Ser-317.

The protein belongs to the G-protein coupled receptor T2R family. Core component of the TAS2R14-GNAI1 complex, consisting of TAS2R14, GNAI1, GNB1 and GNG2; within the complex interacts with GNAI1. Core component of the TAS2R14-GNAT3 complex, consisting of TAS2R14, GNAT3, GNB1 and GNG2; within the complex interacts with GNAT3. Core component of the TAS2R14-GNAS2 complex, consisting of TAS2R14, GNAS2, GNB1 and GNG2; within the complex interacts with GNAS2.

Its subcellular location is the membrane. It catalyses the reaction Ca(2+)(in) = Ca(2+)(out). The catalysed reaction is 3',5'-cyclic AMP(in) = 3',5'-cyclic AMP(out). Its activity is regulated as follows. Basal activity is enhanced by binding to bitter tastants, such as flufenamic acid and aristolochic acid. Regulated by cholesterol in a concentration-dependent manner. In terms of biological role, gustducin-linked G-protein coupled receptor that plays a role in the perception of bitterness. The activity of this receptor stimulates GNAT3, activating the gustducin G-protein pathway. Likely plays a role in sensing the chemical composition of the gastrointestinal content and other extra-oral tissues via the inhibitory G-protein pathways. This is Taste receptor type 2 member 14 (TAS2R14) from Pan troglodytes (Chimpanzee).